The primary structure comprises 209 residues: Potassium-transporting ATPase KdpC subunit (209 aa).

The chain crosses the membrane as a helical span at residues Ala18–Ile38.

It belongs to the KdpC family. As to quaternary structure, the system is composed of three essential subunits: KdpA, KdpB and KdpC.

Its subcellular location is the cell inner membrane. Its function is as follows. Part of the high-affinity ATP-driven potassium transport (or Kdp) system, which catalyzes the hydrolysis of ATP coupled with the electrogenic transport of potassium into the cytoplasm. This subunit acts as a catalytic chaperone that increases the ATP-binding affinity of the ATP-hydrolyzing subunit KdpB by the formation of a transient KdpB/KdpC/ATP ternary complex. The chain is Potassium-transporting ATPase KdpC subunit from Xanthomonas campestris pv. campestris (strain 8004).